The following is a 320-amino-acid chain: Eukaryotic translation initiation factor 3 subunit G (320 aa).

The tract at residues 1 to 60 (MPTGDFDSKPSWADQVEEEGEDDKCVTSELLKGIPLPTGDTSPEPELLPGDPLPPPKEVI) is disordered. Phosphoserine occurs at positions 8 and 11. Thr-38 and Thr-41 each carry phosphothreonine. A phosphoserine mark is found at Ser-42, Ser-189, Ser-223, and Ser-264. A disordered region spans residues 205–233 (AAQNKTGKYVPPSLRDGASRRGESMQPNR). Residues 221–233 (GASRRGESMQPNR) show a composition bias toward basic and acidic residues. Residues 239-317 (ATIRVTNLSE…LILNVEWAKP (79 aa)) enclose the RRM domain.

This sequence belongs to the eIF-3 subunit G family. As to quaternary structure, component of the eukaryotic translation initiation factor 3 (eIF-3) complex, which is composed of 13 subunits: EIF3A, EIF3B, EIF3C, EIF3D, EIF3E, EIF3F, EIF3G, EIF3H, EIF3I, EIF3J, EIF3K, EIF3L and EIF3M. The eIF-3 complex appears to include 3 stable modules: module A is composed of EIF3A, EIF3B, EIF3G and EIF3I; module B is composed of EIF3F, EIF3H, and EIF3M; and module C is composed of EIF3C, EIF3D, EIF3E, EIF3K and EIF3L. EIF3C of module C binds EIF3B of module A and EIF3H of module B, thereby linking the three modules. EIF3J is a labile subunit that binds to the eIF-3 complex via EIF3B. The eIF-3 complex interacts with RPS6KB1 under conditions of nutrient depletion. Mitogenic stimulation leads to binding and activation of a complex composed of MTOR and RPTOR, leading to phosphorylation and release of RPS6KB1 and binding of EIF4B to eIF-3. Interacts (via C-terminus) with AIFM1 (via N-terminus). Interacts with DHX33; the interaction is independent of RNA. Post-translationally, phosphorylated. Phosphorylation is enhanced upon serum stimulation.

It is found in the cytoplasm. The protein localises to the nucleus. It localises to the perinuclear region. RNA-binding component of the eukaryotic translation initiation factor 3 (eIF-3) complex, which is required for several steps in the initiation of protein synthesis. The eIF-3 complex associates with the 40S ribosome and facilitates the recruitment of eIF-1, eIF-1A, eIF-2:GTP:methionyl-tRNAi and eIF-5 to form the 43S pre-initiation complex (43S PIC). The eIF-3 complex stimulates mRNA recruitment to the 43S PIC and scanning of the mRNA for AUG recognition. The eIF-3 complex is also required for disassembly and recycling of post-termination ribosomal complexes and subsequently prevents premature joining of the 40S and 60S ribosomal subunits prior to initiation. The eIF-3 complex specifically targets and initiates translation of a subset of mRNAs involved in cell proliferation, including cell cycling, differentiation and apoptosis, and uses different modes of RNA stem-loop binding to exert either translational activation or repression. This subunit can bind 18S rRNA. In Rattus norvegicus (Rat), this protein is Eukaryotic translation initiation factor 3 subunit G (Eif3g).